The primary structure comprises 295 residues: Protein shisa-2 homolog (295 aa).

An N-terminal signal peptide occupies residues Met-1 to Ala-33. At Ser-34–Ser-110 the chain is on the extracellular side. The disordered stretch occupies residues Gly-87–Asp-108. A helical membrane pass occupies residues Ala-111–Leu-131. The Cytoplasmic segment spans residues Gly-132–Val-295. Residues Pro-168–Asn-205 form a disordered region. The segment covering Ser-169–Ala-197 has biased composition (low complexity).

The protein belongs to the shisa family.

The protein localises to the endoplasmic reticulum membrane. In terms of biological role, plays an essential role in the maturation of presomitic mesoderm cells by individual attenuation of both FGF and WNT signaling. In Homo sapiens (Human), this protein is Protein shisa-2 homolog (SHISA2).